A 370-amino-acid polypeptide reads, in one-letter code: MNEMTHRTKTRPVKVGNLTIGGNNELIIQSMTTTKTHDVEATVAEIKRLEEAGCQVVRVAVPDERAADAIADIKKQINIPLVADIHFDYRLALKAIEGGIDKVRINPGNIGRRHKVEAVVNAAKERGIPIRIGVNAGSLERHILEKYGYPTADGMVESALHHIKILEDLDFHDIIVSMKASDVNLAIEAYEKAARAFDYPLHLGITESGTLFAGTVKSAAGLGAILNKGIGNTLRISLSADPVEEVKVARELLKSFGLASNAATLISCPTCGRIEIDLISIANEVEEYISTLQVPIKVAVLGCAVNGPGEAREADIGIAGARGEGLLFRKGQVVRKVPEETMVEELKKEIDVIAAEMAAEREKEKETQEQ.

[4Fe-4S] cluster contacts are provided by cysteine 268, cysteine 271, cysteine 303, and glutamate 310.

This sequence belongs to the IspG family. [4Fe-4S] cluster is required as a cofactor.

The enzyme catalyses (2E)-4-hydroxy-3-methylbut-2-enyl diphosphate + oxidized [flavodoxin] + H2O + 2 H(+) = 2-C-methyl-D-erythritol 2,4-cyclic diphosphate + reduced [flavodoxin]. Its pathway is isoprenoid biosynthesis; isopentenyl diphosphate biosynthesis via DXP pathway; isopentenyl diphosphate from 1-deoxy-D-xylulose 5-phosphate: step 5/6. Functionally, converts 2C-methyl-D-erythritol 2,4-cyclodiphosphate (ME-2,4cPP) into 1-hydroxy-2-methyl-2-(E)-butenyl 4-diphosphate. This Bacillus cereus (strain B4264) protein is 4-hydroxy-3-methylbut-2-en-1-yl diphosphate synthase (flavodoxin).